Consider the following 220-residue polypeptide: PKHD-type hydroxylase sync_1544 (220 aa).

In terms of domain architecture, Fe2OG dioxygenase spans 79-173 (KLHRFLISKT…RTVCVGWIES (95 aa)). Fe cation-binding residues include His-97, Asp-99, and His-154. Arg-164 lines the 2-oxoglutarate pocket.

Requires Fe(2+) as cofactor. The cofactor is L-ascorbate.

This chain is PKHD-type hydroxylase sync_1544, found in Synechococcus sp. (strain CC9311).